An 86-amino-acid chain; its full sequence is uncharacterized protein (86 aa).

A signal peptide spans 1–25 (MNLRKILLSSALSLGMLVSAAPVLA).

This is an uncharacterized protein from Bacillus subtilis (strain 168).